A 102-amino-acid chain; its full sequence is RNA-binding protein Hfq (102 aa).

Positions 9–68 (DPFLNALRRERVPVSIYLVNGIKLQGQIESFDQFVILLKNTVSQMVYKHAISTVVPSRPV) constitute a Sm domain. A disordered region spans residues 63-102 (VPSRPVSHHSNNAGGGTSSNYHHGSSAQGTSAQQDSEETE). Residues 70-96 (HHSNNAGGGTSSNYHHGSSAQGTSAQQ) show a composition bias toward polar residues.

It belongs to the Hfq family. In terms of assembly, homohexamer.

In terms of biological role, RNA chaperone that binds small regulatory RNA (sRNAs) and mRNAs to facilitate mRNA translational regulation in response to envelope stress, environmental stress and changes in metabolite concentrations. Also binds with high specificity to tRNAs. This Citrobacter koseri (strain ATCC BAA-895 / CDC 4225-83 / SGSC4696) protein is RNA-binding protein Hfq.